We begin with the raw amino-acid sequence, 236 residues long: Uridylate kinase (236 aa).

ATP is bound at residue 8 to 11 (KLSG). Gly-51 provides a ligand contact to UMP. ATP-binding residues include Gly-52 and Arg-56. UMP contacts are provided by residues Asp-71 and 133–140 (TGRPFFTT). ATP-binding residues include Asn-161, Phe-167, and Asp-170.

It belongs to the UMP kinase family. As to quaternary structure, homohexamer.

The protein localises to the cytoplasm. The catalysed reaction is UMP + ATP = UDP + ADP. The protein operates within pyrimidine metabolism; CTP biosynthesis via de novo pathway; UDP from UMP (UMPK route): step 1/1. With respect to regulation, inhibited by UTP. Its function is as follows. Catalyzes the reversible phosphorylation of UMP to UDP. The chain is Uridylate kinase from Mesomycoplasma hyopneumoniae (strain 232) (Mycoplasma hyopneumoniae).